Reading from the N-terminus, the 697-residue chain is Putative flagellar export/assembly protein LfhA (697 aa).

The next 7 membrane-spanning stretches (helical) occupy residues 19-39 (VPLVILCILAMVILPLPPALL), 40-60 (DILFTFNIVLAVMVLLVAVSA), 66-86 (FSLFPTILLITTLMRLTLNVA), 116-136 (GNFVVGFVVFIILMIINFIVV), 204-224 (AIAGMMILAINLIGGVCIGIF), 242-262 (IGDGLVAQIPSLLLSTAAAII), and 280-302 (LLASPSVLYTATGIMFVLAVVPG).

It belongs to the FHIPEP (flagella/HR/invasion proteins export pore) family.

The protein localises to the cell inner membrane. In terms of biological role, part of the flagellar gene cluster Flag-2. However, the Flag-2 flagellar system could be inactive in strain 042 due to a frameshift in lfgC. This is Putative flagellar export/assembly protein LfhA from Escherichia coli O44:H18 (strain 042 / EAEC).